The sequence spans 319 residues: Transmembrane protein 121 (319 aa).

7 helical membrane-spanning segments follow: residues 10–30, 43–63, 74–94, 112–132, 150–170, 174–194, and 214–234; these read HVCL…AYLV, IIVL…AVWV, YAMI…YFIF, ALTL…VALD, LFWV…LWEP, GLPL…LLVL, and MMLY…LARA. Positions 277 to 306 are enriched in pro residues; the sequence is PALSLELQPPPPQRNSVPPPPPPLHGPPGR. The tract at residues 277–319 is disordered; the sequence is PALSLELQPPPPQRNSVPPPPPPLHGPPGRPHMSSPTRDPLDT.

Belongs to the TMEM121 family. As to expression, highly expressed in heart and detected in pancreas, liver and skeletal muscle.

It is found in the membrane. In terms of biological role, may play a role in MAPK signaling. This is Transmembrane protein 121 (TMEM121) from Homo sapiens (Human).